A 91-amino-acid chain; its full sequence is Sec-independent protein translocase protein TatAt (91 aa).

Residues 9–29 (FPGLPGGPELLVVLLIVVLLF) form a helical membrane-spanning segment. The tract at residues 48–91 (FQRGREEIEDELQDMTGDDDEDDATSESSADSVSTDSVSTESSN) is disordered. The span at 54–72 (EIEDELQDMTGDDDEDDAT) shows a compositional bias: acidic residues. The segment covering 73 to 91 (SESSADSVSTDSVSTESSN) has biased composition (low complexity).

Belongs to the TatA/E family. As to quaternary structure, forms a complex with TatC. Cytoplasmic and membrane-bound TatA form high-molecular-weight complexes.

The protein resides in the cell membrane. It is found in the cytoplasm. Functionally, part of the twin-arginine translocation (Tat) system that transports large folded proteins containing a characteristic twin-arginine motif in their signal peptide across membranes. TatA could form the protein-conducting channel of the Tat system. The polypeptide is Sec-independent protein translocase protein TatAt (Haloferax volcanii (strain ATCC 29605 / DSM 3757 / JCM 8879 / NBRC 14742 / NCIMB 2012 / VKM B-1768 / DS2) (Halobacterium volcanii)).